The following is a 558-amino-acid chain: Ankyrin repeat protein OPG189 (558 aa).

ANK repeat units follow at residues 65 to 95 (YGEN…NINK), 169 to 205 (YGCT…DVDK), 209 to 239 (YGNT…NIDS), 243 to 272 (NRYT…NVNA), 276 to 304 (FGTT…ELEI), 339 to 368 (YNET…DFET), and 372 to 401 (SGCT…SLKI).

It belongs to the orthopoxvirus OPG189 protein family.

Its function is as follows. Contributes to viral release without involving rearrangement of host actin. The sequence is that of Ankyrin repeat protein OPG189 (OPG189) from Vaccinia virus (strain Western Reserve) (VACV).